Here is a 294-residue protein sequence, read N- to C-terminus: Probable aspartoacylase (294 aa).

The Zn(2+) site is built by H14 and E17. Substrate is bound by residues R56 and 63 to 64; that span reads NR. Position 106 (H106) interacts with Zn(2+). Substrate contacts are provided by E164 and Y275.

This sequence belongs to the AspA/AstE family. Aspartoacylase subfamily. Zn(2+) serves as cofactor.

It carries out the reaction an N-acyl-L-aspartate + H2O = a carboxylate + L-aspartate. The protein is Probable aspartoacylase of Nostoc sp. (strain PCC 7120 / SAG 25.82 / UTEX 2576).